Reading from the N-terminus, the 409-residue chain is Proteasome-activating nucleotidase (409 aa).

A disordered region spans residues 1–22 (MTLSSAGGSRSHRHNGGHSERD). Positions 23 to 58 (VEIRILKDKVRSLTKEKISLQKELEYYKNEITKLLS) form a coiled coil. ATP contacts are provided by residues 183 to 188 (GTGKTL) and His322.

Belongs to the AAA ATPase family. As to quaternary structure, homohexamer. The hexameric complex has a two-ring architecture resembling a top hat that caps the 20S proteasome core at one or both ends. Upon ATP-binding, the C-terminus of PAN interacts with the alpha-rings of the proteasome core by binding to the intersubunit pockets.

It is found in the cytoplasm. ATPase which is responsible for recognizing, binding, unfolding and translocation of substrate proteins into the archaeal 20S proteasome core particle. Is essential for opening the gate of the 20S proteasome via an interaction with its C-terminus, thereby allowing substrate entry and access to the site of proteolysis. Thus, the C-termini of the proteasomal ATPase function like a 'key in a lock' to induce gate opening and therefore regulate proteolysis. Unfolding activity requires energy from ATP hydrolysis, whereas ATP binding alone promotes ATPase-20S proteasome association which triggers gate opening, and supports translocation of unfolded substrates. This chain is Proteasome-activating nucleotidase, found in Aeropyrum pernix (strain ATCC 700893 / DSM 11879 / JCM 9820 / NBRC 100138 / K1).